The sequence spans 275 residues: Low affinity immunoglobulin gamma Fc region receptor III-A (275 aa).

The N-terminal stretch at methionine 1–alanine 23 is a signal peptide. The Extracellular portion of the chain corresponds to glycine 24–glutamine 207. Ig-like C2-type domains are found at residues alanine 28–glutamine 92 and proline 101–threonine 192. Intrachain disulfides connect cysteine 49–cysteine 91 and cysteine 131–cysteine 175. N-linked (GlcNAc...) asparagine glycosylation is found at asparagine 65, asparagine 168, and asparagine 183. A helical membrane pass occupies residues isoleucine 208–valine 228. The Cytoplasmic portion of the chain corresponds to glutamine 229 to arginine 275. The tract at residues alanine 237–arginine 275 is disordered. A Phosphotyrosine modification is found at tyrosine 239. A compositionally biased stretch (basic and acidic residues) spans proline 242–serine 261. The segment covering phenylalanine 262–arginine 275 has biased composition (polar residues).

In terms of assembly, forms a heterooligomeric complex with ITAM-containing signaling subunits FCER1G. Interacts (via transmembrane domain) with signaling subunits; this interaction is a prerequisite for receptor complex expression on the cell surface and intracellular signal transduction. Binds the Fc region of antigen-complexed IgG. Post-translationally, N-glycosylated. Phosphorylated following receptor ligation.

It localises to the cell membrane. In terms of biological role, receptor for the invariable Fc fragment of immunoglobulin gamma (IgG). Binds with intermediate affinity to both IgG2a and IgG2b. Can bind to IgG2a and IgG2b monomers. Does not display binding to IgG1 or IgG3. Recognizes neutralizing virus-specific IgGs displayed on the cell surface of infected cells and triggers antibody-dependent cellular cytotoxicity (ADCC). Confers protection to lethal influenza virus infection. On splenic dendritic cells, uptakes antigen immune complexes and efficiently divert them into MHC class I and II antigen presentation pathways to provide for superior priming of CD4-positive and CD8-positive T cell immune responses. Mediates neutrophil activation by IgG complexes redundantly with FCGR2A. Plays a role in promoting bone resorption by enhancing osteoclast differentiation following binding to IgG2a. Also acts as a receptor for the Fc region of immunoglobulin epsilon (IgE). Binds with low affinity to both the a and b allotypes of IgE. Has also been shown to bind to IgE allotype a only but not to allotype b. Binds aggregated IgE but not the monomeric form and bound monomeric IgG is readily displaced by IgE complexes. Binding to IgE promotes macrophage-mediated phagocytosis, antigen presentation to T cells, production of pro-inflammatory cytokines and the late phase of cutaneous allergic reactions. Mediates enhanced ADCC in response to afucosylated IgGs. The protein is Low affinity immunoglobulin gamma Fc region receptor III-A of Cricetulus griseus (Chinese hamster).